The chain runs to 74 residues: Large ribosomal subunit protein bL27c (74 aa).

The protein belongs to the bacterial ribosomal protein bL27 family.

The protein localises to the plastid. It is found in the chloroplast. The chain is Large ribosomal subunit protein bL27c (rpl27) from Calyptrosphaera sphaeroidea.